The primary structure comprises 608 residues: Elongation factor 4 (608 aa).

A tr-type G domain is found at 11 to 193; the sequence is KKIRNFSIIA…QIVEKVPEPS (183 aa). GTP contacts are provided by residues 23–28 and 140–143; these read DHGKST and NKID.

The protein belongs to the TRAFAC class translation factor GTPase superfamily. Classic translation factor GTPase family. LepA subfamily.

Its subcellular location is the cell membrane. The enzyme catalyses GTP + H2O = GDP + phosphate + H(+). Required for accurate and efficient protein synthesis under certain stress conditions. May act as a fidelity factor of the translation reaction, by catalyzing a one-codon backward translocation of tRNAs on improperly translocated ribosomes. Back-translocation proceeds from a post-translocation (POST) complex to a pre-translocation (PRE) complex, thus giving elongation factor G a second chance to translocate the tRNAs correctly. Binds to ribosomes in a GTP-dependent manner. The protein is Elongation factor 4 of Listeria innocua serovar 6a (strain ATCC BAA-680 / CLIP 11262).